We begin with the raw amino-acid sequence, 141 residues long: MLQCNKKAENGAMSWLDEVKWDAQGLVPVIAQEAATGDVLMFAWMNREALAKTAELGRAVYFSRSRGRLWFKGEESGHVQTVHEIRLDCDNDVVLLKVTQLGHEPGIACHTGRHSCFFSVLKDGAWQAVDPVLKDPESIYK.

Residue Asp-88 participates in Mg(2+) binding. Cys-89 contributes to the Zn(2+) binding site. Asp-90 and Asp-92 together coordinate Mg(2+). Residues Cys-109 and Cys-116 each contribute to the Zn(2+) site.

Belongs to the PRA-CH family. In terms of assembly, homodimer. Mg(2+) serves as cofactor. The cofactor is Zn(2+).

It localises to the cytoplasm. The catalysed reaction is 1-(5-phospho-beta-D-ribosyl)-5'-AMP + H2O = 1-(5-phospho-beta-D-ribosyl)-5-[(5-phospho-beta-D-ribosylamino)methylideneamino]imidazole-4-carboxamide. It functions in the pathway amino-acid biosynthesis; L-histidine biosynthesis; L-histidine from 5-phospho-alpha-D-ribose 1-diphosphate: step 3/9. Catalyzes the hydrolysis of the adenine ring of phosphoribosyl-AMP. The protein is Phosphoribosyl-AMP cyclohydrolase of Paracidovorax citrulli (strain AAC00-1) (Acidovorax citrulli).